Consider the following 546-residue polypeptide: Interleukin-20 receptor subunit alpha (546 aa).

Positions 1-32 (MHTPGTPAPGHPDPPPLLLLTLLLLLAASGRA) are cleaved as a signal peptide. Over 33–253 (VPCVFCGLPK…EVQTSAWKAK (221 aa)) the chain is Extracellular. Fibronectin type-III domains follow at residues 42–138 (KPTN…FLET) and 139–245 (QVSP…TLEV). Asn-45, Asn-86, Asn-94, Asn-185, and Asn-203 each carry an N-linked (GlcNAc...) asparagine glycan. A disulfide bridge connects residues Cys-90 and Cys-98. Cysteines 218 and 239 form a disulfide. A helical transmembrane segment spans residues 254 to 274 (VIFWYVFLTSVIVFLFSAIGY). At 275 to 546 (LVYRYIHVGK…EWGLHVQMES (272 aa)) the chain is on the cytoplasmic side.

Belongs to the type II cytokine receptor family. As to quaternary structure, heterodimer with IL20RB and heterodimer with IL10RB.

It is found in the membrane. The IL20RA/IL20RB dimer is a receptor for IL19, IL20 and IL24. The IL20RA/IL10RB dimer is a receptor for IL26. The sequence is that of Interleukin-20 receptor subunit alpha (Il20ra) from Mus musculus (Mouse).